The following is a 710-amino-acid chain: Phosphoribosylformylglycinamidine synthase subunit PurL (710 aa).

Histidine 36 is an active-site residue. ATP is bound by residues tyrosine 39 and lysine 80. Glutamate 82 contributes to the Mg(2+) binding site. Substrate-binding positions include 83–86 and arginine 105; that span reads SHNH. Histidine 84 functions as the Proton acceptor in the catalytic mechanism. Aspartate 106 lines the Mg(2+) pocket. Glutamine 226 contacts substrate. Mg(2+) is bound at residue aspartate 252. Position 294-296 (294-296) interacts with substrate; it reads ETQ. Residues aspartate 470 and glycine 507 each coordinate ATP. Residue serine 510 coordinates substrate.

Belongs to the FGAMS family. As to quaternary structure, monomer. Part of the FGAM synthase complex composed of 1 PurL, 1 PurQ and 2 PurS subunits.

The protein resides in the cytoplasm. It catalyses the reaction N(2)-formyl-N(1)-(5-phospho-beta-D-ribosyl)glycinamide + L-glutamine + ATP + H2O = 2-formamido-N(1)-(5-O-phospho-beta-D-ribosyl)acetamidine + L-glutamate + ADP + phosphate + H(+). It participates in purine metabolism; IMP biosynthesis via de novo pathway; 5-amino-1-(5-phospho-D-ribosyl)imidazole from N(2)-formyl-N(1)-(5-phospho-D-ribosyl)glycinamide: step 1/2. Part of the phosphoribosylformylglycinamidine synthase complex involved in the purines biosynthetic pathway. Catalyzes the ATP-dependent conversion of formylglycinamide ribonucleotide (FGAR) and glutamine to yield formylglycinamidine ribonucleotide (FGAM) and glutamate. The FGAM synthase complex is composed of three subunits. PurQ produces an ammonia molecule by converting glutamine to glutamate. PurL transfers the ammonia molecule to FGAR to form FGAM in an ATP-dependent manner. PurS interacts with PurQ and PurL and is thought to assist in the transfer of the ammonia molecule from PurQ to PurL. The chain is Phosphoribosylformylglycinamidine synthase subunit PurL from Sulfolobus acidocaldarius (strain ATCC 33909 / DSM 639 / JCM 8929 / NBRC 15157 / NCIMB 11770).